The following is a 392-amino-acid chain: MDYYDVLGVSKTASPEEIKKSYRKLAVKYHPDKNPGDAEAEKRFKEVSEAYEVLSDPQKRESYDRYGKNGPFAGAGGFGGMGGMGNMEDALRTFMGAFGGEFGGGGSFFEGLFGGLGEAFGMRGDPAGARQGASKKVHITLTFEEAARGVEKELLVSGYKTCETCLGSGAASEQGIKCCDRCKGSGQIVQSRGFFSMASTCPECGGEGRVITDPCSNCRGQGRIKDKRNVHVQIPAGVDSGMRLKMEGYGDAGQNGAPSGDLYVFIDVEAHPVFERRGDDLILELPIGFVDAALGMKKEIPTLLKEGMCRLTVPEGIQSGTILKVKNQGFPNVHGRGRGDLLVRVSVETPQNLSEEQKELLRKFATTEKAENFPKKRGFLDKIKGFFSDFAV.

The J domain occupies D2–G67. The CR-type zinc finger occupies G149–K227. Residues C162, C165, C179, C182, C201, C204, C215, and C218 each coordinate Zn(2+). CXXCXGXG motif repeat units lie at residues C162–G169, C179–G186, C201–G208, and C215–G222.

The protein belongs to the DnaJ family. Homodimer. Requires Zn(2+) as cofactor.

The protein resides in the cytoplasm. In terms of biological role, participates actively in the response to hyperosmotic and heat shock by preventing the aggregation of stress-denatured proteins and by disaggregating proteins, also in an autonomous, DnaK-independent fashion. Unfolded proteins bind initially to DnaJ; upon interaction with the DnaJ-bound protein, DnaK hydrolyzes its bound ATP, resulting in the formation of a stable complex. GrpE releases ADP from DnaK; ATP binding to DnaK triggers the release of the substrate protein, thus completing the reaction cycle. Several rounds of ATP-dependent interactions between DnaJ, DnaK and GrpE are required for fully efficient folding. Also involved, together with DnaK and GrpE, in the DNA replication of plasmids through activation of initiation proteins. This is Chaperone protein DnaJ from Chlamydia caviae (strain ATCC VR-813 / DSM 19441 / 03DC25 / GPIC) (Chlamydophila caviae).